The chain runs to 874 residues: Valine--tRNA ligase (874 aa).

The 'HIGH' region motif lies at 46–56 (PNVTGHLHIGH). The short motif at 523–527 (KMSKS) is the 'KMSKS' region element. Lysine 526 serves as a coordination point for ATP. Residues 805–874 (DYVFQMKKAS…TLTDLKQKVK (70 aa)) adopt a coiled-coil conformation.

Belongs to the class-I aminoacyl-tRNA synthetase family. ValS type 1 subfamily. Monomer.

The protein resides in the cytoplasm. It carries out the reaction tRNA(Val) + L-valine + ATP = L-valyl-tRNA(Val) + AMP + diphosphate. Functionally, catalyzes the attachment of valine to tRNA(Val). As ValRS can inadvertently accommodate and process structurally similar amino acids such as threonine, to avoid such errors, it has a 'posttransfer' editing activity that hydrolyzes mischarged Thr-tRNA(Val) in a tRNA-dependent manner. The sequence is that of Valine--tRNA ligase from Ureaplasma parvum serovar 3 (strain ATCC 700970).